A 213-amino-acid chain; its full sequence is GTP-binding protein yptV4 (213 aa).

Residue 13–21 coordinates GTP; it reads GDTGVGKSC. The Effector region motif lies at 35-43; that stretch reads HDLTIGVEF. GTP contacts are provided by residues 61 to 65, 119 to 122, and 149 to 151; these read DTAGQ, NKCD, and SAR. The tract at residues 194–213 is disordered; it reads AGPQAAKPGEGDARKSSSCC. Residues 202–213 are compositionally biased toward basic and acidic residues; that stretch reads GEGDARKSSSCC. Residues C212 and C213 are each lipidated (S-geranylgeranyl cysteine).

Belongs to the small GTPase superfamily. Rab family.

It is found in the cell membrane. Protein transport. Probably involved in vesicular traffic. The protein is GTP-binding protein yptV4 (YPTV4) of Volvox carteri (Green alga).